Consider the following 238-residue polypeptide: Ribonuclease PH (238 aa).

Phosphate is bound by residues Arg87 and 125–127 (GTR).

Belongs to the RNase PH family. As to quaternary structure, homohexameric ring arranged as a trimer of dimers.

The enzyme catalyses tRNA(n+1) + phosphate = tRNA(n) + a ribonucleoside 5'-diphosphate. Phosphorolytic 3'-5' exoribonuclease that plays an important role in tRNA 3'-end maturation. Removes nucleotide residues following the 3'-CCA terminus of tRNAs; can also add nucleotides to the ends of RNA molecules by using nucleoside diphosphates as substrates, but this may not be physiologically important. Probably plays a role in initiation of 16S rRNA degradation (leading to ribosome degradation) during starvation. In Synechococcus elongatus (strain ATCC 33912 / PCC 7942 / FACHB-805) (Anacystis nidulans R2), this protein is Ribonuclease PH.